We begin with the raw amino-acid sequence, 480 residues long: Cytochrome P450 monooxygenase ORF11 (480 aa).

The chain crosses the membrane as a helical span at residues Leu-9–Ala-29. Asn-265 and Asn-352 each carry an N-linked (GlcNAc...) asparagine glycan. Cys-449 is a heme binding site.

It belongs to the cytochrome P450 family. The cofactor is heme.

Its subcellular location is the membrane. The protein operates within sesquiterpene biosynthesis. Functionally, cytochrome P450 monooxygenase; part of the gene cluster that mediates the biosynthesis of PR-toxin, a bicyclic sesquiterpene belonging to the eremophilane class and acting as a mycotoxin. The first step of the pathway is catalyzed by the aristolochene synthase which performs the cyclization of trans,trans-farnesyl diphosphate (FPP) to the bicyclic sesquiterpene aristolochene. Following the formation of aristolochene, the non-oxygenated aristolochene is converted to the trioxygenated intermediate eremofortin B, via 7-epi-neopetasone. This conversion appears to involve three enzymes, a hydroxysterol oxidase-like enzyme, the quinone-oxidase prx3 that forms the quinone-type-structure in the bicyclic nucleus of aristolochene with the C8-oxo group and the C-3 hydroxyl group, and the P450 monooxygenase ORF6 that introduces the epoxide at the double bond between carbons 1 and 2. No monoxy or dioxy-intermediates have been reported to be released to the broth, so these three early oxidative reactions may be coupled together. Eremofortin B is further oxidized by another P450 monooxygenase, that introduces a second epoxide between carbons 7 and 11 prior to acetylation to eremofortin A by the acetyltransferase ORF8. The second epoxidation may be performed by a second P450 monooxygenase. After the acetylation step, eremofortin A is converted to eremofortin C and then to PR-toxin. First the conversion of eremofortin A to eremofortin C proceeds by oxidation of the side chain of the molecule at C-12 and is catalyzed by the short-chain oxidoreductase prx1. The cytochrome P450 monooxygenase ORF6 is probably also involved in this step. The primary alcohol formed at C-12 is finally oxidized by the short-chain alcohol dehydrogenase prx4 that forms PR-toxin. The chain is Cytochrome P450 monooxygenase ORF11 from Penicillium roqueforti (strain FM164).